Here is a 348-residue protein sequence, read N- to C-terminus: LIM domain-containing protein unc-97 (348 aa).

LIM zinc-binding domains follow at residues 21–73, 82–132, 146–196, 205–255, and 264–315; these read CVRC…CEHD, CGKC…CREC, CHKC…CLRC, CGAC…CEQH, and CFKC…CKRC.

As to quaternary structure, interacts with unc-98. Component of an integrin containing attachment complex, composed of at least pat-2, pat-3, pat-4, pat-6, unc-52, unc-97 and unc-112. As to expression, restricted to tissue types that attach to the hypodermis, specifically body wall muscles, vulval muscles, and mechanosensory neurons.

The protein resides in the cell junction. Its subcellular location is the adherens junction. It is found in the nucleus. In terms of biological role, component of an integrin containing attachment complex, which is required for muscle development and maintenance. Probably function in adherens junction. Affects the structural integrity of the integrin containing muscle adherens junctions and contributes to the mechanosensory functions of touch neurons. The polypeptide is LIM domain-containing protein unc-97 (Caenorhabditis elegans).